Here is a 227-residue protein sequence, read N- to C-terminus: Cytochrome c oxidase subunit 2 (227 aa).

Residues 1-14 (MAYPMQLGFQDATS) lie on the Mitochondrial intermembrane side of the membrane. Residues 15–45 (PIMEELLHFHDHTLMIVFLISSLVLYIISLM) traverse the membrane as a helical segment. The Mitochondrial matrix portion of the chain corresponds to 46-59 (LTTKLTHTSTMDAQ). Residues 60-87 (EVETVWTILPAVILIMIALPSLRILYMM) form a helical membrane-spanning segment. Residues 88–227 (DEINNPSLTV…HFEKWSASML (140 aa)) lie on the Mitochondrial intermembrane side of the membrane. The Cu cation site is built by histidine 161, cysteine 196, glutamate 198, cysteine 200, histidine 204, and methionine 207. Position 198 (glutamate 198) interacts with Mg(2+).

It belongs to the cytochrome c oxidase subunit 2 family. Component of the cytochrome c oxidase (complex IV, CIV), a multisubunit enzyme composed of 14 subunits. The complex is composed of a catalytic core of 3 subunits MT-CO1, MT-CO2 and MT-CO3, encoded in the mitochondrial DNA, and 11 supernumerary subunits COX4I, COX5A, COX5B, COX6A, COX6B, COX6C, COX7A, COX7B, COX7C, COX8 and NDUFA4, which are encoded in the nuclear genome. The complex exists as a monomer or a dimer and forms supercomplexes (SCs) in the inner mitochondrial membrane with NADH-ubiquinone oxidoreductase (complex I, CI) and ubiquinol-cytochrome c oxidoreductase (cytochrome b-c1 complex, complex III, CIII), resulting in different assemblies (supercomplex SCI(1)III(2)IV(1) and megacomplex MCI(2)III(2)IV(2)). Found in a complex with TMEM177, COA6, COX18, COX20, SCO1 and SCO2. Interacts with TMEM177 in a COX20-dependent manner. Interacts with COX20. Interacts with COX16. Cu cation is required as a cofactor.

The protein resides in the mitochondrion inner membrane. It carries out the reaction 4 Fe(II)-[cytochrome c] + O2 + 8 H(+)(in) = 4 Fe(III)-[cytochrome c] + 2 H2O + 4 H(+)(out). In terms of biological role, component of the cytochrome c oxidase, the last enzyme in the mitochondrial electron transport chain which drives oxidative phosphorylation. The respiratory chain contains 3 multisubunit complexes succinate dehydrogenase (complex II, CII), ubiquinol-cytochrome c oxidoreductase (cytochrome b-c1 complex, complex III, CIII) and cytochrome c oxidase (complex IV, CIV), that cooperate to transfer electrons derived from NADH and succinate to molecular oxygen, creating an electrochemical gradient over the inner membrane that drives transmembrane transport and the ATP synthase. Cytochrome c oxidase is the component of the respiratory chain that catalyzes the reduction of oxygen to water. Electrons originating from reduced cytochrome c in the intermembrane space (IMS) are transferred via the dinuclear copper A center (CU(A)) of subunit 2 and heme A of subunit 1 to the active site in subunit 1, a binuclear center (BNC) formed by heme A3 and copper B (CU(B)). The BNC reduces molecular oxygen to 2 water molecules using 4 electrons from cytochrome c in the IMS and 4 protons from the mitochondrial matrix. In Tragelaphus imberbis (Lesser kudu), this protein is Cytochrome c oxidase subunit 2 (MT-CO2).